Here is a 730-residue protein sequence, read N- to C-terminus: MFTGTIFNSLFTLPLVISQFVPPPTRPVDLWDPFKTTTTPFPHGGVNQGLNRDEVVVRLPLGDIVGKEVHLHNLPWTIHKDPTEELPKDGTHFDPNPLKPKNNITVFTFLGVPYAEPPTSQRRFKPPQQLTVFPGKQPYLAFNYAASCAQDVEKSPSPFVDHPYPFMVDEDCLYLNIFSPDISKNAQTTYPVIVFFHGGNFQTGSANEWPAHGLASRGMVVVTVNYRLGAFGFMSMGDSETGNYGLQDQRLALEFVKNNIVTFGGDPQAVTVVGHDAGAASIGFHMQSPYSRHLFRSAATMSGAEVSYHSYIGKTALAFNNTMKLGRYAGCTQAVAQHRWDCILTRSTGDIIDATRNIPIEYNRYLFMPTVDGKYLPGNPLWTLVNAPSGETSIMSPVPMLIGMNAQDGSEVVLEDRRLGEFSQFNDVDHEYLKSYSLEYCYRHNYSMNREATADAILSKYTFWPDRAAAWAIKENFIQFATDAYYTAPMQLSSHLHSSSGSRVFQYVNNYNFSRQHPNLLFIPDWMGVCRDCDLYLMFGYPFLPDELRPIGLRGINFTDTDRNASRTFSNIIRRFSYHQNPNFQFDGSWAAYEPRRHWYINFNYTHEEDWKIPGTLARDYRYQDVAFWNEYIPALVNYMTTTFSPENVAYRREIMVFKWITGVNVIIIALLIVLAGAFGYMVWGNKEDEEAAYKAENHQLVEYRDTGHSVSDATISSRTRSPRSRITNL.

The signal sequence occupies residues 1–18 (MFTGTIFNSLFTLPLVIS). Topologically, residues 19-663 (QFVPPPTRPV…EIMVFKWITG (645 aa)) are extracellular. N-linked (GlcNAc...) asparagine glycosylation is found at asparagine 103, asparagine 320, asparagine 445, asparagine 512, asparagine 557, asparagine 564, and asparagine 604. A helical transmembrane segment spans residues 664–684 (VNVIIIALLIVLAGAFGYMVW). The Cytoplasmic portion of the chain corresponds to 685-730 (GNKEDEEAAYKAENHQLVEYRDTGHSVSDATISSRTRSPRSRITNL).

Belongs to the type-B carboxylesterase/lipase family. Expressed in the pharynx, intestine, and in several cells in the head including dopaminergic neurons.

The protein localises to the cell membrane. Functionally, probable neuronal cell surface protein thought to be involved in cell-cell-interactions. Confers protection against oxidative stress. Plays a role in protecting dopaminergic neurons against oxidative stress-induced neurodegeneration. In Caenorhabditis elegans, this protein is Neuroligin-like protein glit-1.